We begin with the raw amino-acid sequence, 146 residues long: Extracellular globin-2A (146 aa).

The region spanning 4–146 (HCGPLQRLKV…EVIYPGIKHD (143 aa)) is the Globin domain. The cysteines at positions 5 and 134 are disulfide-linked. Residue His-97 participates in heme b binding.

The protein belongs to the globin family. In terms of assembly, disulfide bonded trimer of chains IIA, IIB, and IIC.

In Tylorrhynchus heterochetus (Japanese palolo worm), this protein is Extracellular globin-2A.